The sequence spans 412 residues: Exodeoxyribonuclease 7 large subunit (412 aa).

It belongs to the XseA family. As to quaternary structure, heterooligomer composed of large and small subunits.

The protein localises to the cytoplasm. It catalyses the reaction Exonucleolytic cleavage in either 5'- to 3'- or 3'- to 5'-direction to yield nucleoside 5'-phosphates.. Bidirectionally degrades single-stranded DNA into large acid-insoluble oligonucleotides, which are then degraded further into small acid-soluble oligonucleotides. This Nostoc sp. (strain PCC 7120 / SAG 25.82 / UTEX 2576) protein is Exodeoxyribonuclease 7 large subunit.